The chain runs to 85 residues: Large ribosomal subunit protein bL27 (85 aa).

A disordered region spans residues 1 to 20 (MAHKKAGGSTRNGRDSEAKR).

Belongs to the bacterial ribosomal protein bL27 family.

The polypeptide is Large ribosomal subunit protein bL27 (Klebsiella pneumoniae (strain 342)).